A 310-amino-acid chain; its full sequence is Porphobilinogen deaminase (310 aa).

At Cys241 the chain carries S-(dipyrrolylmethanemethyl)cysteine.

The protein belongs to the HMBS family. Monomer. Dipyrromethane is required as a cofactor.

It carries out the reaction 4 porphobilinogen + H2O = hydroxymethylbilane + 4 NH4(+). Its pathway is porphyrin-containing compound metabolism; protoporphyrin-IX biosynthesis; coproporphyrinogen-III from 5-aminolevulinate: step 2/4. In terms of biological role, tetrapolymerization of the monopyrrole PBG into the hydroxymethylbilane pre-uroporphyrinogen in several discrete steps. This is Porphobilinogen deaminase from Pelobacter propionicus (strain DSM 2379 / NBRC 103807 / OttBd1).